The following is a 227-amino-acid chain: Ribosomal RNA small subunit methyltransferase G (227 aa).

Residues glycine 74, leucine 79, 124 to 125 (AE), and arginine 142 contribute to the S-adenosyl-L-methionine site.

Belongs to the methyltransferase superfamily. RNA methyltransferase RsmG family.

The protein localises to the cytoplasm. In terms of biological role, specifically methylates the N7 position of guanine in position 518 of 16S rRNA. The sequence is that of Ribosomal RNA small subunit methyltransferase G from Mycolicibacterium gilvum (strain PYR-GCK) (Mycobacterium gilvum (strain PYR-GCK)).